The following is a 214-amino-acid chain: Cytochrome c biogenesis ATP-binding export protein CcmA (214 aa).

The 203-residue stretch at 12–214 folds into the ABC transporter domain; sequence LAAHDLAFSR…TRMLTLEVAA (203 aa). An ATP-binding site is contributed by 44 to 51; the sequence is GDNGAGKT.

The protein belongs to the ABC transporter superfamily. CcmA exporter (TC 3.A.1.107) family. The complex is composed of two ATP-binding proteins (CcmA) and two transmembrane proteins (CcmB).

Its subcellular location is the cell inner membrane. The catalysed reaction is heme b(in) + ATP + H2O = heme b(out) + ADP + phosphate + H(+). Part of the ABC transporter complex CcmAB involved in the biogenesis of c-type cytochromes; once thought to export heme, this seems not to be the case, but its exact role is uncertain. Responsible for energy coupling to the transport system. This chain is Cytochrome c biogenesis ATP-binding export protein CcmA, found in Xanthomonas axonopodis pv. citri (strain 306).